A 113-amino-acid chain; its full sequence is Large ribosomal subunit protein P2 (113 aa).

The segment at 66–113 (PVGGGGAVAAADAAPAAAAGGDKKEAKKEEKKEESESEDDDMGFALFE) is disordered. Residues 73-85 (VAAADAAPAAAAG) are compositionally biased toward low complexity. The segment covering 86 to 99 (GDKKEAKKEEKKEE) has biased composition (basic and acidic residues). Ser-100 and Ser-102 each carry phosphoserine.

It belongs to the eukaryotic ribosomal protein P1/P2 family. In terms of assembly, P1 and P2 exist as dimers at the large ribosomal subunit.

Functionally, plays an important role in the elongation step of protein synthesis. This Drosophila melanogaster (Fruit fly) protein is Large ribosomal subunit protein P2 (RpLP2).